A 451-amino-acid polypeptide reads, in one-letter code: uncharacterized protein (451 aa).

11 helical membrane-spanning segments follow: residues 13 to 33, 41 to 61, 97 to 117, 142 to 162, 174 to 194, 217 to 237, 255 to 275, 299 to 319, 345 to 365, 381 to 401, and 429 to 449; these read IGFVMAAAGSAIGLGAIWKFP, GGAFFLIFVLFTILLGYPLLV, ACFLVLSFYSVIGGWILLYIV, NPVQTLAAQLVFMALTVLVVA, AVMMPILFLLFILLVLRSLTL, ILFALGQAFFTLTLGVSVMVT, IVLMNIIVTLLAGLAIFPAVF, LPFGTLFFIGFLVAFLFAALT, WTSGLLIFLVGIPCCLSYGVL, FTVSNVLMPSGALLISLFIPL, and LLRFIVPLAIIIVFLNLIGIL.

Belongs to the sodium:neurotransmitter symporter (SNF) (TC 2.A.22) family.

It is found in the cell membrane. Functionally, putative sodium-dependent transporter. This is an uncharacterized protein from Bacillus subtilis (strain 168).